Consider the following 36-residue polypeptide: Photosystem I reaction center subunit VIII (36 aa).

Residues 8–28 (SILVPLVGLVFPAIAMASLFL) traverse the membrane as a helical segment.

Belongs to the PsaI family.

The protein localises to the plastid. The protein resides in the chloroplast thylakoid membrane. In terms of biological role, may help in the organization of the PsaL subunit. The protein is Photosystem I reaction center subunit VIII of Vitis vinifera (Grape).